The following is a 98-amino-acid chain: Ribonuclease kappa (98 aa).

Helical transmembrane passes span 13–33 (ACGI…GIFF) and 65–85 (VSYN…FSFC).

Belongs to the RNase K family. Interacts with the proton translocation complex V0 of the V-ATPase. Interacts with ATP6AP1. Expressed in brain (at protein level).

The protein resides in the endomembrane system. Its subcellular location is the cytoplasmic vesicle. It localises to the clathrin-coated vesicle membrane. Its function is as follows. Endoribonuclease which preferentially cleaves ApU and ApG phosphodiester bonds. Hydrolyzes UpU bonds at a lower rate. Regulates the activity of vacuolar (H+)-ATPase (V-ATPase) which is responsible for acidifying and maintaining the pH of intracellular compartments. Required at an early stage of receptor-mediated endocytosis. This Bos taurus (Bovine) protein is Ribonuclease kappa (RNASEK).